Here is a 337-residue protein sequence, read N- to C-terminus: MEQFLKGLPKVELHAHLNGSLGIKSLCDLGERLYGTSCKDFLKLCAHFSRFEKDMDACFEKFAFVHELTSTREGLRFATELAIRDFAEDNVQYVEMRTTPKANENYSRRDYLQIVIDAIKAASETYPEITVKLLPSINRAEPVDVAEETVSLAVELARAHPNLILGIDLSGNPGKGRFSDFAPILAQARDKGLKLAIHCAEIENPSEVKEMLHFGMSRCGHGTFLTPEDIGQLKQRNIAIECCLTSNVKSGTVPSLEEHHLKRIMEADAPKVICTDDSGVFDTTLTKEFLIAAETFGLTREQCIDLTLEAVHHSFASEQEQIQMADRVGNYADILVK.

Positions 14 and 16 each coordinate Zn(2+). Residues His16, Asn18, His66, 98–101 (TTPK), and Gly171 each bind N(6)-methyl-AMP. Residue His198 participates in Zn(2+) binding. N(6)-methyl-AMP contacts are provided by Glu201, Asp276, and Asp277. Glu201 functions as the Proton donor in the catalytic mechanism. Asp276 contacts Zn(2+).

The protein belongs to the metallo-dependent hydrolases superfamily. Adenosine and AMP deaminases family. Monomer. Requires Zn(2+) as cofactor.

The catalysed reaction is N(6)-methyl-AMP + H2O + H(+) = IMP + methylamine. Catalyzes the hydrolysis of the free cytosolic methylated adenosine nucleotide N(6)-methyl-AMP (N6-mAMP) to produce inositol monophosphate (IMP) and methylamine. Is required for the catabolism of cytosolic N6-mAMP, which is derived from the degradation of mRNA containing N6-methylated adenine (m6A). In Drosophila melanogaster (Fruit fly), this protein is Adenosine deaminase-like protein (Ada).